A 246-amino-acid chain; its full sequence is Flavin-dependent thymidylate synthase (246 aa).

Residues 17–241 enclose the ThyX domain; that stretch reads ITVELVKSAA…PLTHAAFNAN (225 aa). FAD is bound by residues Ser-69, 92–94, and Glu-101; that span reads RHR. Residues 89-92, 101-105, and Arg-173 each bind dUMP; these read EFMR and EESGR. Residues 92-103 carry the ThyX motif motif; it reads RHRVGWSYNEES. Residues 189–191 and His-195 contribute to the FAD site; that span reads NAR. Arg-200 is a dUMP binding site. The active-site Involved in ionization of N3 of dUMP, leading to its activation is the Arg-200.

It belongs to the thymidylate synthase ThyX family. As to quaternary structure, homotetramer. FAD is required as a cofactor.

The catalysed reaction is dUMP + (6R)-5,10-methylene-5,6,7,8-tetrahydrofolate + NADPH + H(+) = dTMP + (6S)-5,6,7,8-tetrahydrofolate + NADP(+). It functions in the pathway pyrimidine metabolism; dTTP biosynthesis. Its function is as follows. Catalyzes the reductive methylation of 2'-deoxyuridine-5'-monophosphate (dUMP) to 2'-deoxythymidine-5'-monophosphate (dTMP) while utilizing 5,10-methylenetetrahydrofolate (mTHF) as the methyl donor, and NADPH and FADH(2) as the reductant. The chain is Flavin-dependent thymidylate synthase from Streptomyces coelicolor (strain ATCC BAA-471 / A3(2) / M145).